Consider the following 358-residue polypeptide: Protein-arginine kinase (358 aa).

Positions 23-250 constitute a Phosphagen kinase C-terminal domain; that stretch reads VWPVTTFSLA…SKLSVAEVAA (228 aa). ATP contacts are provided by residues 26 to 30, 174 to 178, and 203 to 208; these read VTTFS, KSQCF, and SSLLLG.

Belongs to the ATP:guanido phosphotransferase family.

The catalysed reaction is L-arginyl-[protein] + ATP = N(omega)-phospho-L-arginyl-[protein] + ADP + H(+). Its function is as follows. Catalyzes the specific phosphorylation of arginine residues in proteins. This chain is Protein-arginine kinase, found in Chlamydia pneumoniae (Chlamydophila pneumoniae).